Consider the following 199-residue polypeptide: Chaperone protein TorD (199 aa).

It belongs to the TorD/DmsD family. TorD subfamily.

The protein localises to the cytoplasm. Functionally, involved in the biogenesis of TorA. Acts on TorA before the insertion of the molybdenum cofactor and, as a result, probably favors a conformation of the apoenzyme that is competent for acquiring the cofactor. This Escherichia coli O6:H1 (strain CFT073 / ATCC 700928 / UPEC) protein is Chaperone protein TorD.